The sequence spans 299 residues: GTPase Era (299 aa).

The 169-residue stretch at 8-176 (RCGYVAIVGR…EKLVGERLPE (169 aa)) folds into the Era-type G domain. A G1 region spans residues 16 to 23 (GRPNVGKS). 16 to 23 (GRPNVGKS) contributes to the GTP binding site. Positions 42–46 (QTTRH) are G2. A G3 region spans residues 63-66 (DTPG). GTP contacts are provided by residues 63–67 (DTPGL) and 125–128 (NKAD). A G4 region spans residues 125–128 (NKAD). The tract at residues 155–157 (ISA) is G5. Residues 199–283 (IREKIMRQLG…MLNLWVKVKG (85 aa)) enclose the KH type-2 domain.

It belongs to the TRAFAC class TrmE-Era-EngA-EngB-Septin-like GTPase superfamily. Era GTPase family. As to quaternary structure, monomer.

It localises to the cytoplasm. The protein localises to the cell inner membrane. Its function is as follows. An essential GTPase that binds both GDP and GTP, with rapid nucleotide exchange. Plays a role in 16S rRNA processing and 30S ribosomal subunit biogenesis and possibly also in cell cycle regulation and energy metabolism. This chain is GTPase Era, found in Ectopseudomonas mendocina (strain ymp) (Pseudomonas mendocina).